Here is a 259-residue protein sequence, read N- to C-terminus: tRNA pseudouridine synthase A (259 aa).

The active-site Nucleophile is the D52. Y110 lines the substrate pocket.

The protein belongs to the tRNA pseudouridine synthase TruA family. As to quaternary structure, homodimer.

It catalyses the reaction uridine(38/39/40) in tRNA = pseudouridine(38/39/40) in tRNA. Formation of pseudouridine at positions 38, 39 and 40 in the anticodon stem and loop of transfer RNAs. The sequence is that of tRNA pseudouridine synthase A from Coprothermobacter proteolyticus (strain ATCC 35245 / DSM 5265 / OCM 4 / BT).